Consider the following 203-residue polypeptide: Ribosomal RNA large subunit methyltransferase E (203 aa).

S-adenosyl-L-methionine-binding residues include glycine 59, tryptophan 61, aspartate 79, aspartate 97, and aspartate 119. Lysine 159 functions as the Proton acceptor in the catalytic mechanism.

Belongs to the class I-like SAM-binding methyltransferase superfamily. RNA methyltransferase RlmE family.

It localises to the cytoplasm. The catalysed reaction is uridine(2552) in 23S rRNA + S-adenosyl-L-methionine = 2'-O-methyluridine(2552) in 23S rRNA + S-adenosyl-L-homocysteine + H(+). Specifically methylates the uridine in position 2552 of 23S rRNA at the 2'-O position of the ribose in the fully assembled 50S ribosomal subunit. This chain is Ribosomal RNA large subunit methyltransferase E, found in Desulforapulum autotrophicum (strain ATCC 43914 / DSM 3382 / VKM B-1955 / HRM2) (Desulfobacterium autotrophicum).